A 54-amino-acid polypeptide reads, in one-letter code: Large ribosomal subunit protein bL33 (54 aa).

Belongs to the bacterial ribosomal protein bL33 family.

This Opitutus terrae (strain DSM 11246 / JCM 15787 / PB90-1) protein is Large ribosomal subunit protein bL33.